The sequence spans 118 residues: Small ribosomal subunit protein uS13 (118 aa).

Positions 91-118 are disordered; that stretch reads HRRGLPVRGQRTKTNARTRKGPRKPIKK.

The protein belongs to the universal ribosomal protein uS13 family. As to quaternary structure, part of the 30S ribosomal subunit. Forms a loose heterodimer with protein S19. Forms two bridges to the 50S subunit in the 70S ribosome.

Located at the top of the head of the 30S subunit, it contacts several helices of the 16S rRNA. In the 70S ribosome it contacts the 23S rRNA (bridge B1a) and protein L5 of the 50S subunit (bridge B1b), connecting the 2 subunits; these bridges are implicated in subunit movement. Contacts the tRNAs in the A and P-sites. This chain is Small ribosomal subunit protein uS13, found in Serratia proteamaculans (strain 568).